We begin with the raw amino-acid sequence, 81 residues long: Defensin-like protein 115 (81 aa).

The N-terminal stretch at 1 to 24 (MAITKKMLVVFLLAFLFVTSSVHC) is a signal peptide. Intrachain disulfides connect cysteine 40/cysteine 78, cysteine 46/cysteine 69, cysteine 54/cysteine 76, and cysteine 58/cysteine 77.

This sequence belongs to the DEFL family.

The protein resides in the secreted. The chain is Defensin-like protein 115 from Arabidopsis thaliana (Mouse-ear cress).